Consider the following 510-residue polypeptide: Ectonucleoside triphosphate diphosphohydrolase 1 (510 aa).

The Cytoplasmic segment spans residues Met1–Asn16. Residues Ile17–Leu37 form a helical membrane-spanning segment. The Extracellular portion of the chain corresponds to Thr38–Tyr477. The N-linked (GlcNAc...) asparagine glycan is linked to Asn73. Cysteines 84 and 108 form a disulfide. Glu174 serves as the catalytic Proton acceptor. N-linked (GlcNAc...) asparagine glycans are attached at residues Asn245, Asn274, Asn291, and Asn333. 2 disulfide bridges follow: Cys255/Cys300 and Cys281/Cys324. The cysteines at positions 337 and 342 are disulfide-linked. Asn370 is a glycosylation site (N-linked (GlcNAc...) asparagine). An intrachain disulfide couples Cys390 to Cys413. The N-linked (GlcNAc...) asparagine glycan is linked to Asn457. Residues Val478 to Val498 traverse the membrane as a helical segment. Topologically, residues Cys499 to Val510 are cytoplasmic.

This sequence belongs to the GDA1/CD39 NTPase family. As to quaternary structure, homodimer; disulfide-linked. The cofactor is Ca(2+). It depends on Mg(2+) as a cofactor. Post-translationally, N-glycosylated. Cleaved into two polypeptides that seem to stay together by non-covalent interactions. In terms of processing, the N-terminus is blocked. Post-translationally, palmitoylated on Cys-13; which is required for caveola targeting. Highest expression found in vascular endothelium, smooth muscle, spleen and lung (at protein level). High expression also found in stomach, duodenum, kidney, lymph node and aorta (at protein level).

The protein resides in the membrane. It is found in the caveola. It carries out the reaction a ribonucleoside 5'-triphosphate + 2 H2O = a ribonucleoside 5'-phosphate + 2 phosphate + 2 H(+). The enzyme catalyses a ribonucleoside 5'-triphosphate + H2O = a ribonucleoside 5'-diphosphate + phosphate + H(+). It catalyses the reaction a ribonucleoside 5'-diphosphate + H2O = a ribonucleoside 5'-phosphate + phosphate + H(+). The catalysed reaction is ATP + 2 H2O = AMP + 2 phosphate + 2 H(+). It carries out the reaction ATP + H2O = ADP + phosphate + H(+). The enzyme catalyses ADP + H2O = AMP + phosphate + H(+). It catalyses the reaction CTP + 2 H2O = CMP + 2 phosphate + 2 H(+). The catalysed reaction is CTP + H2O = CDP + phosphate + H(+). It carries out the reaction CDP + H2O = CMP + phosphate + H(+). The enzyme catalyses GTP + 2 H2O = GMP + 2 phosphate + 2 H(+). It catalyses the reaction GTP + H2O = GDP + phosphate + H(+). The catalysed reaction is GDP + H2O = GMP + phosphate + H(+). It carries out the reaction ITP + 2 H2O = IMP + 2 phosphate + 2 H(+). The enzyme catalyses ITP + H2O = IDP + phosphate + H(+). It catalyses the reaction IDP + H2O = IMP + phosphate + H(+). The catalysed reaction is UTP + 2 H2O = UMP + 2 phosphate + 2 H(+). It carries out the reaction UTP + H2O = UDP + phosphate + H(+). The enzyme catalyses UDP + H2O = UMP + phosphate + H(+). The ATP diphosphohydrolase activity is decreased by half by sodium azide. Catalyzes the hydrolysis of both di- and triphosphate nucleotides (NDPs and NTPs) and hydrolyze NTPs to nucleotide monophosphates (NMPs) in two distinct successive phosphate-releasing steps, with NDPs as intermediates and participates in the regulation of extracellular levels of nucleotides. By hydrolyzing proinflammatory ATP and platelet-activating ADP to AMP, it blocks platelet aggregation and supports blood flow. In Sus scrofa (Pig), this protein is Ectonucleoside triphosphate diphosphohydrolase 1.